A 381-amino-acid chain; its full sequence is UDP-4-amino-4-deoxy-L-arabinose--oxoglutarate aminotransferase (381 aa).

An N6-(pyridoxal phosphate)lysine modification is found at Lys-182.

It belongs to the DegT/DnrJ/EryC1 family. ArnB subfamily. As to quaternary structure, homodimer. Requires pyridoxal 5'-phosphate as cofactor.

The enzyme catalyses UDP-4-amino-4-deoxy-beta-L-arabinose + 2-oxoglutarate = UDP-beta-L-threo-pentopyranos-4-ulose + L-glutamate. Its pathway is nucleotide-sugar biosynthesis; UDP-4-deoxy-4-formamido-beta-L-arabinose biosynthesis; UDP-4-deoxy-4-formamido-beta-L-arabinose from UDP-alpha-D-glucuronate: step 2/3. The protein operates within bacterial outer membrane biogenesis; lipopolysaccharide biosynthesis. Its function is as follows. Catalyzes the conversion of UDP-4-keto-arabinose (UDP-Ara4O) to UDP-4-amino-4-deoxy-L-arabinose (UDP-L-Ara4N). The modified arabinose is attached to lipid A and is required for resistance to polymyxin and cationic antimicrobial peptides. The polypeptide is UDP-4-amino-4-deoxy-L-arabinose--oxoglutarate aminotransferase (Proteus mirabilis (strain HI4320)).